Reading from the N-terminus, the 441-residue chain is Serine carboxypeptidase-like 2 (441 aa).

Residues 1 to 29 (MANKYFSSVLKSLLLLLHLVFLSKQHVDS) form the signal peptide. Disulfide bonds link Cys88/Cys331, Cys252/Cys266, and Cys290/Cys297. A glycan (N-linked (GlcNAc...) asparagine) is linked at Asn109. Residue Ser184 is part of the active site. An N-linked (GlcNAc...) asparagine glycan is attached at Asn350. Residue Asp366 is part of the active site. N-linked (GlcNAc...) asparagine glycosylation occurs at Asn382. Residue His419 is part of the active site.

The protein belongs to the peptidase S10 family. In terms of tissue distribution, expressed in seedlings and roots.

Its subcellular location is the secreted. Probable carboxypeptidase. This Arabidopsis thaliana (Mouse-ear cress) protein is Serine carboxypeptidase-like 2 (SCPL2).